Reading from the N-terminus, the 450-residue chain is 23S rRNA (uracil(1939)-C(5))-methyltransferase RlmD (450 aa).

The region spanning 12 to 70 (SKQLSAKLSLSVNQLDHLGAGIAQHQGKVVFIPGALPDETVTVQFTEQKKNYARAKLIK) is the TRAM domain. Residues Cys-83, Cys-89, Cys-92, and Cys-171 each coordinate [4Fe-4S] cluster. S-adenosyl-L-methionine contacts are provided by Gln-283, Phe-312, Asn-317, Glu-333, Asp-360, and Asp-380. The active-site Nucleophile is Cys-406.

The protein belongs to the class I-like SAM-binding methyltransferase superfamily. RNA M5U methyltransferase family. RlmD subfamily.

It carries out the reaction uridine(1939) in 23S rRNA + S-adenosyl-L-methionine = 5-methyluridine(1939) in 23S rRNA + S-adenosyl-L-homocysteine + H(+). Catalyzes the formation of 5-methyl-uridine at position 1939 (m5U1939) in 23S rRNA. This chain is 23S rRNA (uracil(1939)-C(5))-methyltransferase RlmD, found in Shewanella baltica (strain OS155 / ATCC BAA-1091).